The following is a 474-amino-acid chain: MNAVTDLKHDYLVADIKLADWGRKEIAIAETEMPGLMAIRDEFAASQPLKGARIAGSLHMTIQTAVLIETLKALGADVRWASCNIFSTQDHAAAAIAASGTPVFAFKGESLKEYWDFTHRIFEWADGGTPNMILDDGGDATLLLHLGAKAEQDASVIAKPGSEEETFLFAAIKEKLAKDATFYSRNLDAIKGVTEETTTGVHRLYQMAQRGELRFPAINVNDSVTKSKFDNLYGCRESLVDGIKRATDVMIAGKVAVVAGYGDVGKGSAQALRALSAQVWVTEIDPICALQAAMEGYRVVTMDYAAEHGDIFVTCTGNYHVITHDHMAKMKDQAIVCNIGHFDNEIDIASVEQYQWEEIKPQVDHVIFPDGKKIIILAKGRLVNLGCATGHPSYVMSSSFANQTIAQIELWTEAQKGSSKYPVGVYTLPKHLDEKVARLQLKKLNAQLTVLTDKQAAYIGVSKEGPYKADHYRY.

3 residues coordinate substrate: T61, D136, and E196. T197–T199 serves as a coordination point for NAD(+). Positions 226 and 230 each coordinate substrate. Residues N231, G260–G265, E283, N318, I339–H341, and N384 each bind NAD(+).

This sequence belongs to the adenosylhomocysteinase family. The cofactor is NAD(+).

Its subcellular location is the cytoplasm. It carries out the reaction S-adenosyl-L-homocysteine + H2O = L-homocysteine + adenosine. It participates in amino-acid biosynthesis; L-homocysteine biosynthesis; L-homocysteine from S-adenosyl-L-homocysteine: step 1/1. Functionally, may play a key role in the regulation of the intracellular concentration of adenosylhomocysteine. This chain is Adenosylhomocysteinase, found in Ralstonia nicotianae (strain ATCC BAA-1114 / GMI1000) (Ralstonia solanacearum).